Reading from the N-terminus, the 810-residue chain is F-BAR domain only protein 2 (810 aa).

An F-BAR domain is found at 3–250 (MAYFVENFWG…NMANTTVESL (248 aa)). The segment at 3-274 (MAYFVENFWG…PGLIEFEECD (272 aa)) is mediates dimerization and binding to membranes enriched in Pi(4,5)-P2 and induces their tubulation. A coiled-coil region spans residues 87 to 156 (HLDLVRKLQE…CVEQERLKKE (70 aa)). Lysine 297 participates in a covalent cross-link: Glycyl lysine isopeptide (Lys-Gly) (interchain with G-Cter in SUMO2). Positions 301–352 (DAESVECPDADSLNIPDVDEEGYSIKPETNQNDTKENHFYSSSDSDSEDEEP) are disordered. Serine 312 carries the phosphoserine modification. At threonine 385 the chain carries Phosphothreonine. Phosphoserine occurs at positions 387, 394, and 403. Positions 403–537 (SNEELTKSKP…VSRGPSPVSL (135 aa)) are disordered. Residues 433 to 456 (PSLDSSSSSSLTSSSSARPTTPLS) show a composition bias toward low complexity. Residues serine 488, serine 493, serine 496, serine 508, serine 510, serine 511, and serine 533 each carry the phosphoserine modification. The span at 502 to 521 (PLARAESSSSISSSASLSAA) shows a compositional bias: low complexity. The mediates interaction with DAB2, EPS15, EPS15R and ITSN1 stretch occupies residues 521–810 (ANTPTVGVSR…FATGRYLADC (290 aa)). Residues 542–809 (TLPVAVALTE…RFATGRYLAD (268 aa)) enclose the MHD domain.

The protein belongs to the FCHO family. In terms of assembly, homodimer; disulfide-linked. May form homotetramer. Interacts with AP2A1. Interacts with EPS15, EPS15R, ITSN1 and ITSN2; recruit those scaffolding proteins which in turn may interact with the adaptor protein complex AP-2 at the plasma membrane. Interacts with DAB2 (via DPF motifs); mediates LDL receptor/LDLR endocytosis. In terms of processing, ubiquitinated. Mainly undergoes monoubiquitination but also polyubiquitination.

It localises to the membrane. The protein resides in the clathrin-coated pit. Its function is as follows. Functions in an early step of clathrin-mediated endocytosis. Has both a membrane binding/bending activity and the ability to recruit proteins essential to the formation of functional clathrin-coated pits. Has a lipid-binding activity with a preference for membranes enriched in phosphatidylserine and phosphoinositides (Pi(4,5) biphosphate) like the plasma membrane. Its membrane-bending activity might be important for the subsequent action of clathrin and adaptors in the formation of clathrin-coated vesicles. Involved in adaptor protein complex AP-2-dependent endocytosis of the transferrin receptor, it also functions in the AP-2-independent endocytosis of the LDL receptor. The chain is F-BAR domain only protein 2 (FCHO2) from Pongo abelii (Sumatran orangutan).